The following is a 353-amino-acid chain: Protein XRP2 (353 aa).

Residues 1 to 37 (MGCFFSKKAKRKRNSEEEQPQQDGEEPKQYSWDKREK) form a disordered region. The N-myristoyl glycine moiety is linked to residue Gly-2. Cys-3 is lipidated: S-palmitoyl cysteine. The segment covering 25-37 (EEPKQYSWDKREK) has biased composition (basic and acidic residues). The 156-residue stretch at 27 to 182 (PKQYSWDKRE…TWSNIHDFTP (156 aa)) folds into the C-CAP/cofactor C-like domain. GTP-binding positions include 101–102 (GS) and 118–121 (QQFR).

This sequence belongs to the TBCC family. Myristoylated on Gly-2; which may be required for membrane targeting. In terms of processing, palmitoylated on Cys-3; which may be required for plasma membrane targeting.

The protein resides in the cell membrane. Acts as a GTPase-activating protein (GAP) for tubulin in concert with tubulin-specific chaperone C, but does not enhance tubulin heterodimerization. Acts as a GTPase-activating protein. May act as guanine nucleotide dissociation inhibitor towards ADP-ribosylation factor-like proteins. The protein is Protein XRP2 (rp2) of Xenopus laevis (African clawed frog).